A 334-amino-acid polypeptide reads, in one-letter code: GTPase Obg (334 aa).

Positions 1-159 (MKFVDSASVR…REIGLELSVM (159 aa)) constitute an Obg domain. The OBG-type G domain occupies 160–332 (ADIGLLGIPN…LVAGLFKLVL (173 aa)). Residues 166-173 (GIPNAGKS), 191-195 (FTTLH), 212-215 (DIPG), 282-285 (NKID), and 313-315 (SAL) contribute to the GTP site. 2 residues coordinate Mg(2+): Ser-173 and Thr-193.

It belongs to the TRAFAC class OBG-HflX-like GTPase superfamily. OBG GTPase family. In terms of assembly, monomer. Requires Mg(2+) as cofactor.

The protein localises to the cytoplasm. Functionally, an essential GTPase which binds GTP, GDP and possibly (p)ppGpp with moderate affinity, with high nucleotide exchange rates and a fairly low GTP hydrolysis rate. Plays a role in control of the cell cycle, stress response, ribosome biogenesis and in those bacteria that undergo differentiation, in morphogenesis control. The polypeptide is GTPase Obg (Vesicomyosocius okutanii subsp. Calyptogena okutanii (strain HA)).